The sequence spans 243 residues: Vesicle-associated membrane protein-associated protein B (243 aa).

The residue at position 2 (Ala2) is an N-acetylalanine. The Cytoplasmic portion of the chain corresponds to 2–218; that stretch reads AKVEQVLSLE…PAPATPGKEE (217 aa). An MSP domain is found at 7–124; sequence VLSLEPQHEL…MDSKLRCVFE (118 aa). Ser146 carries the phosphoserine modification. Lys147 is covalently cross-linked (Glycyl lysine isopeptide (Lys-Gly) (interchain with G-Cter in SUMO1)). The residue at position 150 (Thr150) is a Phosphothreonine. Phosphoserine occurs at positions 158 and 159. The stretch at 161 to 196 forms a coiled coil; it reads LDDTEVKKVMEECKRLQSEVQRLREENKQLKEEDGL. Residues 185-197 are compositionally biased toward basic and acidic residues; sequence EENKQLKEEDGLR. The segment at 185–217 is disordered; it reads EENKQLKEEDGLRMRKPVLSNSPAPAPATPGKE. The residue at position 206 (Ser206) is a Phosphoserine. A helical; Anchor for type IV membrane protein transmembrane segment spans residues 219-239; that stretch reads GLSTRLLALVVLFFIVGVIIG.

Belongs to the VAMP-associated protein (VAP) (TC 9.B.17) family. In terms of assembly, homodimer, and heterodimer with VAPA. Interacts with VAMP1 and VAMP2. Interacts (via MSP domain) with ZFYVE27. Interacts with RMDN3. Interacts with KIF5A in a ZFYVE27-dependent manner. Interacts (via MSP domain) with STARD3 (via phospho-FFAT motif). Interacts with STARD3NL (via FFAT motif). Interacts with CERT1. Interacts with PLEKHA3 and SACM1L to form a ternary complex. Interacts with VPS13A (via FFAT motif). Interacts with RB1CC1 (via phosphorylated FFAT motif), MIGA2 (via phosphorylated FFAT motif), RMDN3 (via phosphorylated FFAT motif), OSBPL1A (via FFAT motif), KCNB1 (via phosphorylated FFAT motif) and KCNB2 (via phosphorylated FFAT motif). Interacts (via MSP domain) with WDR44 (via FFAT motif); the interactions connect the endoplasmic reticulum (ER) with the endosomal tubule.

It localises to the endoplasmic reticulum membrane. Its function is as follows. Endoplasmic reticulum (ER)-anchored protein that mediates the formation of contact sites between the ER and endosomes via interaction with FFAT motif-containing proteins such as STARD3 or WDR44. Interacts with STARD3 in a FFAT motif phosphorylation dependent manner. Via interaction with WDR44 participates in neosynthesized protein export. Participates in the endoplasmic reticulum unfolded protein response (UPR) by inducing ERN1/IRE1 activity. Involved in cellular calcium homeostasis regulation. The chain is Vesicle-associated membrane protein-associated protein B from Sus scrofa (Pig).